Reading from the N-terminus, the 197-residue chain is Heart- and neural crest derivatives-expressed protein 1 (197 aa).

Disordered regions lie at residues 61 to 94 and 155 to 184; these read VVGP…RRTE and VDGK…KGRT. Residues 78-90 are compositionally biased toward basic residues; sequence LGRRKGAPPKKER. The 53-residue stretch at 80 to 132 folds into the bHLH domain; sequence RRKGAPPKKERRRTESINSAFAELRECIPNVPADTKLSKIKTLRLATSYIGYL.

As to quaternary structure, efficient DNA binding requires dimerization with another bHLH protein. As to expression, highly expressed in the adult heart and expressed at lower levels in the intestine and gall bladder.

The protein localises to the nucleus. The protein resides in the nucleolus. In terms of biological role, plays an essential role in cardiac morphogenesis. The polypeptide is Heart- and neural crest derivatives-expressed protein 1 (hand1) (Xenopus laevis (African clawed frog)).